We begin with the raw amino-acid sequence, 493 residues long: MKYSDLRDFISQLEKIGQLKRITQPISTHLTMTEISDRTLRAKGPALLFENAVSESGEPYNMPVLTNLFGTPDRVALAMGQKDVGALRDVGKLLAMLKEPEPPKGFRDALGKIPVYKQVLNMPVKVIKKPLCQQIVLSGDDVDLTKMPIQSCWPGDVAPLITWGLTVTRGPHKERQNLGIYRQQVLSKNKVIMRWLSHRGGALDFQEFKKENPGEKYPVSVALGADPATILGAVTPVPDTLSEYAFAGLLRGAKTEVAKSISNDLEVPATAEIILEGYLDPEEMAPEGPYGDHTGYYNEVDNFPVMTVTHITMRKDAIYHSTYTGRPPDEPAILGVALNEVFVPILQKQFPEIQDFYLPPEGCSYRLAVVTIKKQYAGHAKRVMMGVWSFLRQFMYTKFVIVCDDDINARDWEDVIWAMTTRMDPSRDTVLIENTPIDYLDFASPVSGLGSKMGMDATNKWPGETNREWGEPIEMTQEIKNQVDELWDELDIL.

Residue asparagine 177 coordinates Mn(2+). Residues 180–182 (IYR), 194–196 (RWL), and 199–200 (RG) contribute to the prenylated FMN site. Glutamate 243 contributes to the Mn(2+) binding site. The active-site Proton donor is aspartate 292.

This sequence belongs to the UbiD family. In terms of assembly, homohexamer. Prenylated FMN is required as a cofactor. It depends on Mn(2+) as a cofactor.

It is found in the cell membrane. It carries out the reaction a 4-hydroxy-3-(all-trans-polyprenyl)benzoate + H(+) = a 2-(all-trans-polyprenyl)phenol + CO2. Its pathway is cofactor biosynthesis; ubiquinone biosynthesis. In terms of biological role, catalyzes the decarboxylation of 3-octaprenyl-4-hydroxy benzoate to 2-octaprenylphenol, an intermediate step in ubiquinone biosynthesis. The protein is 3-octaprenyl-4-hydroxybenzoate carboxy-lyase of Colwellia psychrerythraea (strain 34H / ATCC BAA-681) (Vibrio psychroerythus).